The sequence spans 218 residues: Pyridoxine/pyridoxamine 5'-phosphate oxidase (218 aa).

Residues 14–17 (RREY) and Lys72 each bind substrate. FMN is bound by residues 67–72 (RIVLLK), 82–83 (YT), Arg88, Lys89, and Gln111. Substrate contacts are provided by Tyr129, Arg133, and Ser137. FMN contacts are provided by residues 146 to 147 (QS) and Trp191. 197–199 (RLH) serves as a coordination point for substrate. Arg201 provides a ligand contact to FMN.

It belongs to the pyridoxamine 5'-phosphate oxidase family. In terms of assembly, homodimer. Requires FMN as cofactor.

It catalyses the reaction pyridoxamine 5'-phosphate + O2 + H2O = pyridoxal 5'-phosphate + H2O2 + NH4(+). The enzyme catalyses pyridoxine 5'-phosphate + O2 = pyridoxal 5'-phosphate + H2O2. It participates in cofactor metabolism; pyridoxal 5'-phosphate salvage; pyridoxal 5'-phosphate from pyridoxamine 5'-phosphate: step 1/1. The protein operates within cofactor metabolism; pyridoxal 5'-phosphate salvage; pyridoxal 5'-phosphate from pyridoxine 5'-phosphate: step 1/1. Catalyzes the oxidation of either pyridoxine 5'-phosphate (PNP) or pyridoxamine 5'-phosphate (PMP) into pyridoxal 5'-phosphate (PLP). The chain is Pyridoxine/pyridoxamine 5'-phosphate oxidase from Salmonella typhi.